Reading from the N-terminus, the 364-residue chain is D-alanine--D-alanine ligase A (364 aa).

Positions 145-348 (KRLLRDAGLN…YTDLITRLIE (204 aa)) constitute an ATP-grasp domain. 175 to 230 (ESKLGLPLFVKPANQGSSVGVSKVTSEEQYTIAVDLAFEFDHKVIVEQGIKGREIE) is an ATP binding site. Residues Asp302, Glu315, and Asn317 each coordinate Mg(2+).

It belongs to the D-alanine--D-alanine ligase family. The cofactor is Mg(2+). It depends on Mn(2+) as a cofactor.

The protein resides in the cytoplasm. The catalysed reaction is 2 D-alanine + ATP = D-alanyl-D-alanine + ADP + phosphate + H(+). The protein operates within cell wall biogenesis; peptidoglycan biosynthesis. Its function is as follows. Cell wall formation. The sequence is that of D-alanine--D-alanine ligase A from Escherichia coli O6:H1 (strain CFT073 / ATCC 700928 / UPEC).